A 565-amino-acid polypeptide reads, in one-letter code: Periplasmic trehalase (565 aa).

The first 30 residues, 1–30 (MKSPAPSRPQKMALIPACIFLYFAALSVQA), serve as a signal peptide directing secretion. Residues arginine 152, 159–160 (WD), asparagine 196, 205–207 (RSQ), 277–279 (RPE), and glycine 310 contribute to the substrate site. Residues aspartate 312 and glutamate 496 each act as proton donor/acceptor in the active site. Residue glutamate 511 participates in substrate binding. The tract at residues 540–565 (DNVPATHPTVKSATTQPSTKEAQPTP) is disordered. Positions 548–565 (TVKSATTQPSTKEAQPTP) are enriched in polar residues.

It belongs to the glycosyl hydrolase 37 family. In terms of assembly, monomer.

The protein localises to the periplasm. The catalysed reaction is alpha,alpha-trehalose + H2O = alpha-D-glucose + beta-D-glucose. Functionally, provides the cells with the ability to utilize trehalose at high osmolarity by splitting it into glucose molecules that can subsequently be taken up by the phosphotransferase-mediated uptake system. This chain is Periplasmic trehalase, found in Shigella flexneri serotype 5b (strain 8401).